Consider the following 969-residue polypeptide: RNA polymerase-associated protein RapA (969 aa).

In terms of domain architecture, Helicase ATP-binding spans 164 to 334 (EVGRRYAPRV…FARLRLLDPD (171 aa)). Position 177 to 184 (177 to 184 (DEVGLGKT)) interacts with ATP. The DEAH box signature appears at 280-283 (DEAH). The 177-residue stretch at 492–668 (RVNWLLELLK…GKSDGLESLI (177 aa)) folds into the Helicase C-terminal domain.

The protein belongs to the SNF2/RAD54 helicase family. RapA subfamily. In terms of assembly, interacts with the RNAP. Has a higher affinity for the core RNAP than for the holoenzyme. Its ATPase activity is stimulated by binding to RNAP.

Its function is as follows. Transcription regulator that activates transcription by stimulating RNA polymerase (RNAP) recycling in case of stress conditions such as supercoiled DNA or high salt concentrations. Probably acts by releasing the RNAP, when it is trapped or immobilized on tightly supercoiled DNA. Does not activate transcription on linear DNA. Probably not involved in DNA repair. This chain is RNA polymerase-associated protein RapA, found in Aliivibrio fischeri (strain MJ11) (Vibrio fischeri).